The primary structure comprises 370 residues: Cobalt-precorrin-5B C(1)-methyltransferase (370 aa).

It belongs to the CbiD family.

It catalyses the reaction Co-precorrin-5B + S-adenosyl-L-methionine = Co-precorrin-6A + S-adenosyl-L-homocysteine. It functions in the pathway cofactor biosynthesis; adenosylcobalamin biosynthesis; cob(II)yrinate a,c-diamide from sirohydrochlorin (anaerobic route): step 6/10. Its function is as follows. Catalyzes the methylation of C-1 in cobalt-precorrin-5B to form cobalt-precorrin-6A. The protein is Cobalt-precorrin-5B C(1)-methyltransferase of Pseudomonas syringae pv. tomato (strain ATCC BAA-871 / DC3000).